A 241-amino-acid chain; its full sequence is Co-chaperone protein p23-1 (241 aa).

The region spanning 2–91 (SRHPEVKWAE…AEPERWNKLL (90 aa)) is the CS domain. MGG repeat units lie at residues 129 to 131 (MGG), 132 to 134 (MGG), 135 to 137 (MGG), 138 to 140 (MGG), 141 to 143 (MGG), 144 to 146 (MGG), 147 to 149 (MGG), 150 to 152 (MGG), 162 to 164 (MGG), 165 to 167 (MGG), 168 to 170 (MGG), 171 to 173 (MGG), 180 to 182 (MGG), 183 to 185 (MGG), 186 to 188 (MGG), 189 to 191 (MGG), and 192 to 194 (MGG). Residues 129–194 (MGGMGGMGGM…GMGGMGGMGG (66 aa)) form a 17 X 3 AA repeats of M-G-G region. The disordered stretch occupies residues 188-241 (GMGGMGGMEEFEDSDDEEETAKSGDKKDDAVKEEGLATEKAPAAEETTSVKEDK). Residues 196 to 206 (EEFEDSDDEEE) are compositionally biased toward acidic residues. The segment covering 207 to 224 (TAKSGDKKDDAVKEEGLA) has biased composition (basic and acidic residues). The segment covering 225–234 (TEKAPAAEET) has biased composition (low complexity).

Belongs to the p23/wos2 family. In terms of assembly, interacts with HSP90 in an ATP-dependent manner. Interacts with HSP90-5, HSP90-6 and HSP90-7. Widely expressed but preferentially in the root meristem.

The protein resides in the cytoplasm. It localises to the nucleus. Functionally, acts as a co-chaperone for HSP90. Controls root development through the modulation of auxin distribution in the root meristem. In Arabidopsis thaliana (Mouse-ear cress), this protein is Co-chaperone protein p23-1.